The primary structure comprises 438 residues: UDP-N-acetylglucosamine 1-carboxyvinyltransferase 1 (438 aa).

22–23 (KN) contacts phosphoenolpyruvate. Arginine 95 lines the UDP-N-acetyl-alpha-D-glucosamine pocket. Residue cysteine 119 is the Proton donor of the active site. Cysteine 119 carries the 2-(S-cysteinyl)pyruvic acid O-phosphothioketal modification. UDP-N-acetyl-alpha-D-glucosamine-binding positions include 124 to 128 (RPIDL), aspartate 307, and valine 329.

It belongs to the EPSP synthase family. MurA subfamily.

The protein resides in the cytoplasm. The enzyme catalyses phosphoenolpyruvate + UDP-N-acetyl-alpha-D-glucosamine = UDP-N-acetyl-3-O-(1-carboxyvinyl)-alpha-D-glucosamine + phosphate. The protein operates within cell wall biogenesis; peptidoglycan biosynthesis. Its function is as follows. Cell wall formation. Adds enolpyruvyl to UDP-N-acetylglucosamine. The chain is UDP-N-acetylglucosamine 1-carboxyvinyltransferase 1 from Lactiplantibacillus plantarum (strain ATCC BAA-793 / NCIMB 8826 / WCFS1) (Lactobacillus plantarum).